A 156-amino-acid chain; its full sequence is MTLFFSHRLFTVWRLKCGVMDIGWPSVLPAAGKKYQIELPVVHEEELEEQFVRGSGPGGQATNKTSNCVVLRHIPSGIVVKCHETRSVDLNRKRAREILREKLEVAYKGEESELLKMKKESMQKKQDKRRKVNENIEKKRRFKEMLNSKQEDDKST.

The segment at 44-108 (EEELEEQFVR…LREKLEVAYK (65 aa)) is GGQ domain. The GGQ motif lies at 58–60 (GGQ). The stretch at 100-141 (REKLEVAYKGEESELLKMKKESMQKKQDKRRKVNENIEKKRR) forms a coiled coil. Basic and acidic residues-rich tracts occupy residues 114-125 (LLKMKKESMQKK) and 132-156 (VNEN…DKST). Positions 114–156 (LLKMKKESMQKKQDKRRKVNENIEKKRRFKEMLNSKQEDDKST) are disordered.

Belongs to the prokaryotic/mitochondrial release factor family. Interacts (via C-terminus) with MTRES1 (via S4 domain). Associates with mitoribosomal S39 large subunit, peptidyl tRNA and nascent chain.

It localises to the mitochondrion. In terms of biological role, part of a mitoribosome-associated quality control pathway that prevents aberrant translation by responding to interruptions during elongation. As heterodimer with MTRES1, ejects the unfinished nascent chain and peptidyl transfer RNA (tRNA), respectively, from stalled ribosomes. Recruitment of mitoribosome biogenesis factors to these quality control intermediates suggests additional roles for MTRES1 and MTRF during mitoribosome rescue. This chain is Mitochondrial translation release factor in rescue (mtrfr), found in Danio rerio (Zebrafish).